The primary structure comprises 824 residues: Glycerol-3-phosphate acyltransferase (824 aa).

Residues 302–307 (CHRSHM) carry the HXXXXD motif motif.

It belongs to the GPAT/DAPAT family.

It is found in the cell inner membrane. It carries out the reaction sn-glycerol 3-phosphate + an acyl-CoA = a 1-acyl-sn-glycero-3-phosphate + CoA. Its pathway is phospholipid metabolism; CDP-diacylglycerol biosynthesis; CDP-diacylglycerol from sn-glycerol 3-phosphate: step 1/3. The protein is Glycerol-3-phosphate acyltransferase of Actinobacillus pleuropneumoniae serotype 3 (strain JL03).